Here is a 249-residue protein sequence, read N- to C-terminus: Small ribosomal subunit protein eS6 (249 aa).

Disordered regions lie at residues 161–181 (PLAK…RLVT) and 194–249 (LKKQ…SSQK). Residues 216–229 (RSKEAKEKRQEQIA) show a composition bias toward basic and acidic residues. 5 positions are modified to phosphoserine: serine 235, serine 236, serine 240, serine 244, and serine 247. Residues 236–249 (SLRASTSKSESSQK) are compositionally biased toward low complexity.

This sequence belongs to the eukaryotic ribosomal protein eS6 family. Component of the small ribosomal subunit. Part of the small subunit (SSU) processome, composed of more than 70 proteins and the RNA chaperone small nucleolar RNA (snoRNA) U3. Post-translationally, ribosomal protein S6 is the major substrate of protein kinases in eukaryote ribosomes. The phosphorylation is stimulated by growth factors, tumor promoting agents, and mitogens. It is dephosphorylated at growth arrest.

Its subcellular location is the cytoplasm. It is found in the nucleus. It localises to the nucleolus. In terms of biological role, component of the 40S small ribosomal subunit. Plays an important role in controlling cell growth and proliferation through the selective translation of particular classes of mRNA. Part of the small subunit (SSU) processome, first precursor of the small eukaryotic ribosomal subunit. During the assembly of the SSU processome in the nucleolus, many ribosome biogenesis factors, an RNA chaperone and ribosomal proteins associate with the nascent pre-rRNA and work in concert to generate RNA folding, modifications, rearrangements and cleavage as well as targeted degradation of pre-ribosomal RNA by the RNA exosome. In Xenopus laevis (African clawed frog), this protein is Small ribosomal subunit protein eS6 (rps6).